We begin with the raw amino-acid sequence, 356 residues long: Carbamoyl phosphate synthase small chain (356 aa).

The CPSase stretch occupies residues 1-160 (MKGYLKLEDG…TKKPYRIAGI (160 aa)). L-glutamine is bound by residues S45, G211, and G213. In terms of domain architecture, Glutamine amidotransferase type-1 spans 163–350 (KLAFIDLGTK…MDIVMVYKRR (188 aa)). C238 serves as the catalytic Nucleophile. 5 residues coordinate L-glutamine: L239, Q242, N280, G282, and Y283. Residues H323 and E325 contribute to the active site.

The protein belongs to the CarA family. In terms of assembly, composed of two chains; the small (or glutamine) chain promotes the hydrolysis of glutamine to ammonia, which is used by the large (or ammonia) chain to synthesize carbamoyl phosphate. Tetramer of heterodimers (alpha,beta)4.

The enzyme catalyses hydrogencarbonate + L-glutamine + 2 ATP + H2O = carbamoyl phosphate + L-glutamate + 2 ADP + phosphate + 2 H(+). The catalysed reaction is L-glutamine + H2O = L-glutamate + NH4(+). The protein operates within amino-acid biosynthesis; L-arginine biosynthesis; carbamoyl phosphate from bicarbonate: step 1/1. It participates in pyrimidine metabolism; UMP biosynthesis via de novo pathway; (S)-dihydroorotate from bicarbonate: step 1/3. Small subunit of the glutamine-dependent carbamoyl phosphate synthetase (CPSase). CPSase catalyzes the formation of carbamoyl phosphate from the ammonia moiety of glutamine, carbonate, and phosphate donated by ATP, constituting the first step of 2 biosynthetic pathways, one leading to arginine and/or urea and the other to pyrimidine nucleotides. The small subunit (glutamine amidotransferase) binds and cleaves glutamine to supply the large subunit with the substrate ammonia. This is Carbamoyl phosphate synthase small chain from Caldanaerobacter subterraneus subsp. tengcongensis (strain DSM 15242 / JCM 11007 / NBRC 100824 / MB4) (Thermoanaerobacter tengcongensis).